Reading from the N-terminus, the 232-residue chain is MDRMMKSKFVALALSLFLSQSVLAGGVGLSSTRVIYDGSKKEASLTVQNKSKTEEFLIQSWVDDAAGSKKTPFIITPPLFKLDPEKNNILRIVNITPGLPQDRESVYWVNVKAIPSKSDDSENKNVLQIAVRTRIKLFYRPAGLKGDVKTAPNELRFTRNGNQLRVDNPTVFNITFNQFFANDKEIEKAGMVPAKGALNITLPAGVGSVSKIKYNTINDFGSXAEMITKNVD.

The signal sequence occupies residues 1–24 (MDRMMKSKFVALALSLFLSQSVLA).

It belongs to the periplasmic pilus chaperone family.

The protein localises to the periplasm. In terms of biological role, part of the lpfABCC'DE fimbrial operon. LP fimbriae may participate in the interaction with eukaryotic cells by assisting in microcolony formation. The sequence is that of Probable fimbrial chaperone LpfB (lpfB) from Escherichia coli O157:H7.